The chain runs to 119 residues: Large ribosomal subunit protein bL20 (119 aa).

This sequence belongs to the bacterial ribosomal protein bL20 family.

Its function is as follows. Binds directly to 23S ribosomal RNA and is necessary for the in vitro assembly process of the 50S ribosomal subunit. It is not involved in the protein synthesizing functions of that subunit. This is Large ribosomal subunit protein bL20 from Shewanella woodyi (strain ATCC 51908 / MS32).